A 218-amino-acid polypeptide reads, in one-letter code: GTP cyclohydrolase 1 (218 aa).

The Zn(2+) site is built by cysteine 109, histidine 112, and cysteine 180.

This sequence belongs to the GTP cyclohydrolase I family. In terms of assembly, toroid-shaped homodecamer, composed of two pentamers of five dimers.

The enzyme catalyses GTP + H2O = 7,8-dihydroneopterin 3'-triphosphate + formate + H(+). Its pathway is cofactor biosynthesis; 7,8-dihydroneopterin triphosphate biosynthesis; 7,8-dihydroneopterin triphosphate from GTP: step 1/1. This Haemophilus influenzae (strain 86-028NP) protein is GTP cyclohydrolase 1.